Consider the following 317-residue polypeptide: Neuroguidin-A (317 aa).

Disordered stretches follow at residues 125-170 (ENDP…SKVK) and 280-317 (SALT…RRRH). Acidic residues predominate over residues 146-157 (DERESDSGEEGA). Positions 297-317 (KKSKKGPKKSKKKKGFSRRRH) are enriched in basic residues.

The protein belongs to the SAS10 family. Part of the small subunit (SSU) processome, composed of more than 70 proteins and the RNA chaperone small nucleolar RNA (snoRNA) U3.

The protein resides in the nucleus. It localises to the nucleolus. Its subcellular location is the chromosome. The protein localises to the centromere. It is found in the cytoplasm. The protein resides in the cell projection. It localises to the axon. Its subcellular location is the dendrite. The protein localises to the filopodium. In terms of biological role, part of the small subunit (SSU) processome, first precursor of the small eukaryotic ribosomal subunit. During the assembly of the SSU processome in the nucleolus, many ribosome biogenesis factors, an RNA chaperone and ribosomal proteins associate with the nascent pre-rRNA and work in concert to generate RNA folding, modifications, rearrangements and cleavage as well as targeted degradation of pre-ribosomal RNA by the RNA exosome. Its dissociation from the complex determines the transition from state pre-A1 to state pre-A1*. May inhibit mRNA translation. The protein is Neuroguidin-A (ngdn-a) of Xenopus laevis (African clawed frog).